The chain runs to 504 residues: UDP-N-acetylmuramoylalanine--D-glutamate ligase (504 aa).

129–135 (GTNGKTT) provides a ligand contact to ATP.

This sequence belongs to the MurCDEF family.

The protein localises to the cytoplasm. It catalyses the reaction UDP-N-acetyl-alpha-D-muramoyl-L-alanine + D-glutamate + ATP = UDP-N-acetyl-alpha-D-muramoyl-L-alanyl-D-glutamate + ADP + phosphate + H(+). It participates in cell wall biogenesis; peptidoglycan biosynthesis. Its function is as follows. Cell wall formation. Catalyzes the addition of glutamate to the nucleotide precursor UDP-N-acetylmuramoyl-L-alanine (UMA). In Burkholderia mallei (strain ATCC 23344), this protein is UDP-N-acetylmuramoylalanine--D-glutamate ligase.